A 251-amino-acid chain; its full sequence is Large ribosomal subunit protein uL16m (251 aa).

The N-terminal 29 residues, 1-29, are a transit peptide targeting the mitochondrion; sequence MWRLLSGARAPVLRATLSDSWAAPPARAG.

The protein belongs to the universal ribosomal protein uL16 family. Component of the mitochondrial ribosome large subunit (39S) which comprises a 16S rRNA and about 50 distinct proteins.

The protein resides in the mitochondrion. This is Large ribosomal subunit protein uL16m (MRPL16) from Bos taurus (Bovine).